Consider the following 566-residue polypeptide: SRSF protein kinase 3 (566 aa).

The segment covering 1–13 (MSASTGGGGGGDS) has biased composition (gly residues). The disordered stretch occupies residues 1–60 (MSASTGGGGGGDSGSSSSSSSQASCGPEPSGSELAPPTPAPRMLQGLLGSDDEEQEDPKD). Over residues 14-26 (GSSSSSSSQASCG) the composition is skewed to low complexity. Position 50 is a phosphoserine (Ser-50). In terms of domain architecture, Protein kinase spans 79-564 (YHVVRKLGWG…AADCLQHPWL (486 aa)). ATP-binding positions include 85–93 (LGWGHFSTV) and Lys-108. Asp-212 acts as the Proton acceptor in catalysis. The span at 236–254 (EWQQSGAPPPSRSTVSTAP) shows a compositional bias: polar residues. Disordered regions lie at residues 236–283 (EWQQ…LLEE) and 295–353 (EAAA…SGFS). The segment covering 263–278 (SKNKRKKMRRKRKQQK) has biased composition (basic residues). Ser-329 carries the post-translational modification Phosphoserine. Residues 330–339 (PASSSPAPGG) are compositionally biased toward low complexity. The segment covering 344 to 353 (SPGSQTSGFS) has biased composition (polar residues).

The protein belongs to the protein kinase superfamily. As to expression, highly expressed in skeletal muscle, heart, uterus and parorchis. Weakly expressed in brain, stomach, small intestine and ovary.

The protein localises to the nucleus. It is found in the cytoplasm. It carries out the reaction L-seryl-[protein] + ATP = O-phospho-L-seryl-[protein] + ADP + H(+). The enzyme catalyses L-threonyl-[protein] + ATP = O-phospho-L-threonyl-[protein] + ADP + H(+). Serine/arginine-rich protein-specific kinase which specifically phosphorylates its substrates at serine residues located in regions rich in arginine/serine dipeptides, known as RS domains. Phosphorylates the SR splicing factor SRSF1 and the lamin-B receptor (LBR) in vitro. Required for normal muscle development. This Sus scrofa (Pig) protein is SRSF protein kinase 3 (SRPK3).